Reading from the N-terminus, the 488-residue chain is Erythromycin resistance ATP-binding protein MsrA (488 aa).

The ABC transporter 1 domain occupies 6 to 199 (IKFNQINHKL…NQYEQEQLEQ (194 aa)). 38–45 (GGNGTGKT) contributes to the ATP binding site. Residues 200–298 (QRKYEQYISE…KIYDIHNNYP (99 aa)) are Q-linker, rich in Glu and hydrophilic AA. The interval 211–255 (QRLSQASKAKRNQAQQMAQASSKQKNKSIAPDRLSASKEKGTVEK) is disordered. Residues 222-233 (NQAQQMAQASSK) are compositionally biased toward low complexity. The span at 245-255 (SASKEKGTVEK) shows a compositional bias: basic and acidic residues. Residues 299-487 (IIAQNLTLVK…ELTGQSIHDI (189 aa)) enclose the ABC transporter 2 domain. 331–338 (GANGVGKT) contacts ATP.

The protein belongs to the ABC transporter superfamily.

Functionally, confers resistance to 14-membered ring macrolides (like erythromycin) and to B streptogramins, by acting as an ATP-dependent efflux pump. The chain is Erythromycin resistance ATP-binding protein MsrA (msrA) from Staphylococcus epidermidis.